The following is a 198-amino-acid chain: dITP/XTP pyrophosphatase (198 aa).

11 to 16 (THNPGK) provides a ligand contact to substrate. Residues glutamate 44 and aspartate 73 each contribute to the Mg(2+) site. Catalysis depends on aspartate 73, which acts as the Proton acceptor. Substrate contacts are provided by residues serine 74, 156 to 159 (FGYD), lysine 179, and 184 to 185 (HR).

The protein belongs to the HAM1 NTPase family. In terms of assembly, homodimer. Mg(2+) is required as a cofactor.

It catalyses the reaction XTP + H2O = XMP + diphosphate + H(+). The catalysed reaction is dITP + H2O = dIMP + diphosphate + H(+). The enzyme catalyses ITP + H2O = IMP + diphosphate + H(+). Functionally, pyrophosphatase that catalyzes the hydrolysis of nucleoside triphosphates to their monophosphate derivatives, with a high preference for the non-canonical purine nucleotides XTP (xanthosine triphosphate), dITP (deoxyinosine triphosphate) and ITP. Seems to function as a house-cleaning enzyme that removes non-canonical purine nucleotides from the nucleotide pool, thus preventing their incorporation into DNA/RNA and avoiding chromosomal lesions. This chain is dITP/XTP pyrophosphatase (ysnA), found in Bacillus subtilis (strain 168).